The sequence spans 223 residues: MKRTKSIRHASFRKNWSARHLTPVALAVATVFMLASCEKSDETVSLYQNADDCSAANPGKSAECTTAYNNALKEAERTAPKYATREDCVAEFGEGQCQQAPAQAGMAPENQAQAQQSSGSFWMPLMAGYMMGRLMGGGAGFAQQPLFSSKNPASPAYGKYTDATGKNYGAAQPGRTMTVPKTAMAPKPATTTTVTRGGFGESIAKQSTMQRSATGTSSRSMGG.

A compositionally biased stretch (low complexity) spans 178-195 (TVPKTAMAPKPATTTTVT). Residues 178-223 (TVPKTAMAPKPATTTTVTRGGFGESIAKQSTMQRSATGTSSRSMGG) form a disordered region. Residues 204–223 (AKQSTMQRSATGTSSRSMGG) show a composition bias toward polar residues.

Belongs to the UPF0441 family.

This chain is UPF0441 protein YgiB, found in Shigella boydii serotype 4 (strain Sb227).